The following is a 254-amino-acid chain: Leucyl/phenylalanyl-tRNA--protein transferase (254 aa).

This sequence belongs to the L/F-transferase family.

The protein localises to the cytoplasm. The catalysed reaction is N-terminal L-lysyl-[protein] + L-leucyl-tRNA(Leu) = N-terminal L-leucyl-L-lysyl-[protein] + tRNA(Leu) + H(+). It carries out the reaction N-terminal L-arginyl-[protein] + L-leucyl-tRNA(Leu) = N-terminal L-leucyl-L-arginyl-[protein] + tRNA(Leu) + H(+). It catalyses the reaction L-phenylalanyl-tRNA(Phe) + an N-terminal L-alpha-aminoacyl-[protein] = an N-terminal L-phenylalanyl-L-alpha-aminoacyl-[protein] + tRNA(Phe). Functions in the N-end rule pathway of protein degradation where it conjugates Leu, Phe and, less efficiently, Met from aminoacyl-tRNAs to the N-termini of proteins containing an N-terminal arginine or lysine. The protein is Leucyl/phenylalanyl-tRNA--protein transferase of Burkholderia cenocepacia (strain ATCC BAA-245 / DSM 16553 / LMG 16656 / NCTC 13227 / J2315 / CF5610) (Burkholderia cepacia (strain J2315)).